A 98-amino-acid chain; its full sequence is UPF0235 protein azo3464 (98 aa).

This sequence belongs to the UPF0235 family.

The chain is UPF0235 protein azo3464 from Azoarcus sp. (strain BH72).